Here is a 205-residue protein sequence, read N- to C-terminus: Large ribosomal subunit protein uL4 (205 aa).

It belongs to the universal ribosomal protein uL4 family. Part of the 50S ribosomal subunit. Contacts proteins L15 and L34.

In terms of biological role, one of the primary rRNA binding proteins, this protein initially binds near the 5'-end of the 23S rRNA. It is important during the early stages of 50S assembly. Functionally, makes multiple contacts with different domains of the 23S rRNA in the assembled 50S subunit. Its function is as follows. This protein is located close to the polypeptide exit tunnel, and interacts with the modified macrolide azithromycin, which blocks the tunnel. The protein is Large ribosomal subunit protein uL4 (rplD) of Deinococcus radiodurans (strain ATCC 13939 / DSM 20539 / JCM 16871 / CCUG 27074 / LMG 4051 / NBRC 15346 / NCIMB 9279 / VKM B-1422 / R1).